Reading from the N-terminus, the 129-residue chain is Glycine cleavage system H protein (129 aa).

One can recognise a Lipoyl-binding domain in the interval 24-106 (TYTVGITEHA…YAGGWIFKIK (83 aa)). Lys-65 carries the post-translational modification N6-lipoyllysine.

It belongs to the GcvH family. The glycine cleavage system is composed of four proteins: P, T, L and H. It depends on (R)-lipoate as a cofactor.

Functionally, the glycine cleavage system catalyzes the degradation of glycine. The H protein shuttles the methylamine group of glycine from the P protein to the T protein. The protein is Glycine cleavage system H protein of Shigella dysenteriae serotype 1 (strain Sd197).